The following is a 282-amino-acid chain: Osteoclast-associated immunoglobulin-like receptor (282 aa).

Positions 1-18 (MALVLILQLLTLWPLCHT) are cleaved as a signal peptide. Ig-like domains follow at residues 22–116 (PSVP…SQPS) and 126–219 (ELPR…SWEG). Asn48 carries N-linked (GlcNAc...) asparagine glycosylation. Cys53 and Cys100 are joined by a disulfide. The N-linked (GlcNAc...) asparagine glycan is linked to Asn145. The tract at residues 221 to 282 (GPEARPASSA…PAPPPSDPGV (62 aa)) is disordered. The segment covering 273-282 (PAPPPSDPGV) has biased composition (pro residues).

It belongs to the leukocyte receptor complex/polymeric immunoglobulin receptor (PIR/LRC) family.

It localises to the secreted. The protein resides in the cell membrane. Its function is as follows. Regulator of osteoclastogenesis which plays an important bone-specific function in osteoclast differentiation. The sequence is that of Osteoclast-associated immunoglobulin-like receptor (OSCAR) from Homo sapiens (Human).